A 416-amino-acid polypeptide reads, in one-letter code: Peptide chain release factor subunit 1 (416 aa).

Belongs to the eukaryotic release factor 1 family. In terms of assembly, heterodimer of two subunits, one of which binds GTP.

It localises to the cytoplasm. In terms of biological role, directs the termination of nascent peptide synthesis (translation) in response to the termination codons UAA, UAG and UGA. The chain is Peptide chain release factor subunit 1 from Haloquadratum walsbyi (strain DSM 16790 / HBSQ001).